A 446-amino-acid chain; its full sequence is tRNA-2-methylthio-N(6)-dimethylallyladenosine synthase (446 aa).

In terms of domain architecture, MTTase N-terminal spans 2-122 (KKAYVKSYGC…LPDLLRQSRE (121 aa)). 6 residues coordinate [4Fe-4S] cluster: Cys11, Cys47, Cys85, Cys157, Cys161, and Cys164. A Radical SAM core domain is found at 143–375 (RNRGVTGFLT…QDLLDRQRHA (233 aa)). Residues 378-440 (AASVGTLTEI…SNSLFGETLE (63 aa)) enclose the TRAM domain.

This sequence belongs to the methylthiotransferase family. MiaB subfamily. In terms of assembly, monomer. [4Fe-4S] cluster serves as cofactor.

Its subcellular location is the cytoplasm. It catalyses the reaction N(6)-dimethylallyladenosine(37) in tRNA + (sulfur carrier)-SH + AH2 + 2 S-adenosyl-L-methionine = 2-methylsulfanyl-N(6)-dimethylallyladenosine(37) in tRNA + (sulfur carrier)-H + 5'-deoxyadenosine + L-methionine + A + S-adenosyl-L-homocysteine + 2 H(+). Catalyzes the methylthiolation of N6-(dimethylallyl)adenosine (i(6)A), leading to the formation of 2-methylthio-N6-(dimethylallyl)adenosine (ms(2)i(6)A) at position 37 in tRNAs that read codons beginning with uridine. This is tRNA-2-methylthio-N(6)-dimethylallyladenosine synthase from Methylorubrum extorquens (strain PA1) (Methylobacterium extorquens).